Here is a 526-residue protein sequence, read N- to C-terminus: Outer capsid protein VP5 (526 aa).

Residues 1 to 42 (MGKIIKSLSRFGKKVGNALTSNTAKKIYSTIGKAAERFAESE) form an involved in membrane permeabilization region.

This sequence belongs to the orbivirus VP5 family.

The protein localises to the virion. In terms of biological role, VP5 protein is one of the two proteins (with VP2) which constitute the virus particle outer capsid. Acts as a membrane permeabilization protein that mediates release of viral particles from endosomal compartments into the cytoplasm. Permeabilization activity is probably negatively regulated by VP2 and is triggered by endosomal degradation of VP2 and exposure to low pH. This is Outer capsid protein VP5 (Segment-6) from Antilocapra americana (Pronghorn).